We begin with the raw amino-acid sequence, 307 residues long: Cuticle collagen 36 (307 aa).

Disordered regions lie at residues 76-102 (TRSR…GGPT) and 116-307 (QQGP…PPGY). Over residues 86–102 (EGSGSGGSGSGGYGGPT) the composition is skewed to gly residues. Triple-helical region stretches follow at residues 89 to 105 (GSGG…TGAG), 118 to 150 (GPAG…EGSI), 167 to 187 (GPQG…KGKS), 194 to 226 (GKNG…PGRV), 231 to 257 (GAAG…AGLT), and 260 to 295 (GGQG…EGSC). Pro residues predominate over residues 157–168 (PSEPCIICPPGP). Over residues 186-196 (KSQERAADGKN) the composition is skewed to basic and acidic residues. Pro residues predominate over residues 202 to 220 (IGPPGPPGGVGEPGPPGPA). A compositionally biased stretch (low complexity) spans 231–242 (GAAGPAGPRGVK). Gly residues predominate over residues 258–278 (EIGGQGPPGDAGGPGPVGGQG). Residues 279 to 288 (PPGPQGPQGP) are compositionally biased toward pro residues.

This sequence belongs to the cuticular collagen family. In terms of assembly, collagen polypeptide chains are complexed within the cuticle by disulfide bonds and other types of covalent cross-links.

Functionally, nematode cuticles are composed largely of collagen-like proteins. The cuticle functions both as an exoskeleton and as a barrier to protect the worm from its environment. The chain is Cuticle collagen 36 (col-36) from Caenorhabditis elegans.